A 618-amino-acid chain; its full sequence is UvrABC system protein C (618 aa).

The region spanning 13 to 92 is the GIY-YIG domain; the sequence is DKPGVYLMKN…IKKYRPKYNI (80 aa). Positions 204–239 constitute a UVR domain; it reads LDIVENFKLNMEKAAENLEFEKAAMLRDKINIIEKI.

It belongs to the UvrC family. As to quaternary structure, interacts with UvrB in an incision complex.

It localises to the cytoplasm. Its function is as follows. The UvrABC repair system catalyzes the recognition and processing of DNA lesions. UvrC both incises the 5' and 3' sides of the lesion. The N-terminal half is responsible for the 3' incision and the C-terminal half is responsible for the 5' incision. The sequence is that of UvrABC system protein C from Clostridium botulinum (strain Loch Maree / Type A3).